Here is an 874-residue protein sequence, read N- to C-terminus: Alanine--tRNA ligase (874 aa).

Residues histidine 564, histidine 568, cysteine 665, and histidine 669 each contribute to the Zn(2+) site.

Belongs to the class-II aminoacyl-tRNA synthetase family. Zn(2+) serves as cofactor.

Its subcellular location is the cytoplasm. It catalyses the reaction tRNA(Ala) + L-alanine + ATP = L-alanyl-tRNA(Ala) + AMP + diphosphate. Functionally, catalyzes the attachment of alanine to tRNA(Ala) in a two-step reaction: alanine is first activated by ATP to form Ala-AMP and then transferred to the acceptor end of tRNA(Ala). Also edits incorrectly charged Ser-tRNA(Ala) and Gly-tRNA(Ala) via its editing domain. The protein is Alanine--tRNA ligase of Burkholderia pseudomallei (strain 668).